The primary structure comprises 874 residues: Alanine--tRNA ligase (874 aa).

Residues His-564, His-568, Cys-665, and His-669 each contribute to the Zn(2+) site.

It belongs to the class-II aminoacyl-tRNA synthetase family. Zn(2+) serves as cofactor.

It localises to the cytoplasm. The catalysed reaction is tRNA(Ala) + L-alanine + ATP = L-alanyl-tRNA(Ala) + AMP + diphosphate. In terms of biological role, catalyzes the attachment of alanine to tRNA(Ala) in a two-step reaction: alanine is first activated by ATP to form Ala-AMP and then transferred to the acceptor end of tRNA(Ala). Also edits incorrectly charged Ser-tRNA(Ala) and Gly-tRNA(Ala) via its editing domain. The sequence is that of Alanine--tRNA ligase from Burkholderia thailandensis (strain ATCC 700388 / DSM 13276 / CCUG 48851 / CIP 106301 / E264).